Consider the following 164-residue polypeptide: Protein SprT (164 aa).

The SprT-like domain occupies 14–156 (QQAETFFKRP…LCKRCRETLV (143 aa)). His-69 lines the Zn(2+) pocket. Glu-70 is an active-site residue. His-73 serves as a coordination point for Zn(2+).

This sequence belongs to the SprT family. It depends on Zn(2+) as a cofactor.

Its subcellular location is the cytoplasm. This is Protein SprT from Pseudomonas putida (strain W619).